The primary structure comprises 421 residues: Gamma-glutamyl phosphate reductase (421 aa).

Belongs to the gamma-glutamyl phosphate reductase family.

The protein localises to the cytoplasm. The catalysed reaction is L-glutamate 5-semialdehyde + phosphate + NADP(+) = L-glutamyl 5-phosphate + NADPH + H(+). The protein operates within amino-acid biosynthesis; L-proline biosynthesis; L-glutamate 5-semialdehyde from L-glutamate: step 2/2. In terms of biological role, catalyzes the NADPH-dependent reduction of L-glutamate 5-phosphate into L-glutamate 5-semialdehyde and phosphate. The product spontaneously undergoes cyclization to form 1-pyrroline-5-carboxylate. This chain is Gamma-glutamyl phosphate reductase, found in Pseudomonas fluorescens (strain ATCC BAA-477 / NRRL B-23932 / Pf-5).